The following is a 166-amino-acid chain: MGELTTSIVAAEEGGGTSNFLIPNGTFFVVLLIFLIVLGVIAKWVVPPVSKVLAEREAMLAKTAADNRKSAEQVAAAQADYDKTMADARGEASSIRDEARVAGRQVVDEKRAVASGEVAETVKSADQQLSQQGSAAQSELQSSVDGLSATLASRILGVDVNSGGSR.

The chain crosses the membrane as a helical span at residues 27 to 47 (FFVVLLIFLIVLGVIAKWVVP). Positions 124-143 (SADQQLSQQGSAAQSELQSS) are disordered.

It belongs to the ATPase B chain family. As to quaternary structure, F-type ATPases have 2 components, F(1) - the catalytic core - and F(0) - the membrane proton channel. F(1) has five subunits: alpha(3), beta(3), gamma(1), delta(1), epsilon(1). F(0) has three main subunits: a(1), b(2) and c(10-14). The alpha and beta chains form an alternating ring which encloses part of the gamma chain. F(1) is attached to F(0) by a central stalk formed by the gamma and epsilon chains, while a peripheral stalk is formed by the delta and b chains.

It localises to the cell membrane. Functionally, f(1)F(0) ATP synthase produces ATP from ADP in the presence of a proton or sodium gradient. F-type ATPases consist of two structural domains, F(1) containing the extramembraneous catalytic core and F(0) containing the membrane proton channel, linked together by a central stalk and a peripheral stalk. During catalysis, ATP synthesis in the catalytic domain of F(1) is coupled via a rotary mechanism of the central stalk subunits to proton translocation. In terms of biological role, component of the F(0) channel, it forms part of the peripheral stalk, linking F(1) to F(0). This chain is ATP synthase subunit b, found in Mycolicibacterium vanbaalenii (strain DSM 7251 / JCM 13017 / BCRC 16820 / KCTC 9966 / NRRL B-24157 / PYR-1) (Mycobacterium vanbaalenii).